A 361-amino-acid polypeptide reads, in one-letter code: Tegument protein UL51 homolog (361 aa).

Cys-8 carries the S-palmitoyl cysteine; by host lipid modification. A disordered region spans residues 251–299 (GDEEDEVTVMSPSPEPVQQQPPVEPVQQQPQGRGSHRRRYKESAPQETL). Residues 266-281 (PVQQQPPVEPVQQQPQ) show a composition bias toward low complexity.

The protein belongs to the herpesviridae UL51 family. Oligomerizes. Interacts with UL103; this interaction mediates UL103 incorporation to virions. Phosphorylated. Post-translationally, palmitoylation is necessary for Golgi localization.

It is found in the virion tegument. The protein resides in the host cytoplasm. The protein localises to the host Golgi apparatus. Functionally, plays several roles during the time course of infection, including egress of virus particles from the perinuclear space and secondary envelopment of cytoplasmic capsids that bud into specific trans-Golgi network (TGN)-derived membranes. The polypeptide is Tegument protein UL51 homolog (UL71) (Homo sapiens (Human)).